Reading from the N-terminus, the 148-residue chain is Large ribosomal subunit protein bL9 (148 aa).

Belongs to the bacterial ribosomal protein bL9 family.

Its function is as follows. Binds to the 23S rRNA. In Bacillus cereus (strain B4264), this protein is Large ribosomal subunit protein bL9.